The sequence spans 647 residues: Chaperone protein DnaK (647 aa).

T199 carries the phosphothreonine; by autocatalysis modification. The tract at residues 602–647 is disordered; that stretch reads MYAQEQAQAGQQAGPGAGSASAGQSGEKPVEGEVVDAEFEEVKDKK. Positions 604-627 are enriched in low complexity; that stretch reads AQEQAQAGQQAGPGAGSASAGQSG.

Belongs to the heat shock protein 70 family.

Its function is as follows. Acts as a chaperone. This chain is Chaperone protein DnaK, found in Nitrosomonas eutropha (strain DSM 101675 / C91 / Nm57).